Here is a 132-residue protein sequence, read N- to C-terminus: UPF0299 membrane protein YohJ (132 aa).

4 helical membrane-spanning segments follow: residues Ile7–Phe27, Leu31–Ala51, Gly63–Met83, and Phe93–Trp113.

The protein belongs to the UPF0299 family.

The protein localises to the cell inner membrane. The chain is UPF0299 membrane protein YohJ from Shigella dysenteriae serotype 1 (strain Sd197).